A 320-amino-acid polypeptide reads, in one-letter code: UDP-N-acetylenolpyruvoylglucosamine reductase (320 aa).

One can recognise an FAD-binding PCMH-type domain in the interval 35-216 (RAGGPAQVLF…KQAMDEVQHH (182 aa)). Residue R181 is part of the active site. S230 (proton donor) is an active-site residue. Residue E300 is part of the active site.

It belongs to the MurB family. It depends on FAD as a cofactor.

Its subcellular location is the cytoplasm. The catalysed reaction is UDP-N-acetyl-alpha-D-muramate + NADP(+) = UDP-N-acetyl-3-O-(1-carboxyvinyl)-alpha-D-glucosamine + NADPH + H(+). It participates in cell wall biogenesis; peptidoglycan biosynthesis. Cell wall formation. This is UDP-N-acetylenolpyruvoylglucosamine reductase from Brucella anthropi (strain ATCC 49188 / DSM 6882 / CCUG 24695 / JCM 21032 / LMG 3331 / NBRC 15819 / NCTC 12168 / Alc 37) (Ochrobactrum anthropi).